We begin with the raw amino-acid sequence, 32 residues long: Photosystem I reaction center subunit XII (32 aa).

A helical transmembrane segment spans residues 3–23 (SISDGQIVVALISAFIIVILA).

This sequence belongs to the PsaM family.

It localises to the plastid. The protein resides in the chloroplast thylakoid membrane. The protein is Photosystem I reaction center subunit XII of Anthoceros angustus (Hornwort).